The primary structure comprises 145 residues: D-aminoacyl-tRNA deacylase (145 aa).

A Gly-cisPro motif, important for rejection of L-amino acids motif is present at residues 137-138; it reads GP.

This sequence belongs to the DTD family. In terms of assembly, homodimer.

It localises to the cytoplasm. It carries out the reaction glycyl-tRNA(Ala) + H2O = tRNA(Ala) + glycine + H(+). The enzyme catalyses a D-aminoacyl-tRNA + H2O = a tRNA + a D-alpha-amino acid + H(+). Functionally, an aminoacyl-tRNA editing enzyme that deacylates mischarged D-aminoacyl-tRNAs. Also deacylates mischarged glycyl-tRNA(Ala), protecting cells against glycine mischarging by AlaRS. Acts via tRNA-based rather than protein-based catalysis; rejects L-amino acids rather than detecting D-amino acids in the active site. By recycling D-aminoacyl-tRNA to D-amino acids and free tRNA molecules, this enzyme counteracts the toxicity associated with the formation of D-aminoacyl-tRNA entities in vivo and helps enforce protein L-homochirality. This Photorhabdus laumondii subsp. laumondii (strain DSM 15139 / CIP 105565 / TT01) (Photorhabdus luminescens subsp. laumondii) protein is D-aminoacyl-tRNA deacylase.